A 156-amino-acid chain; its full sequence is Small ribosomal subunit protein uS7 (156 aa).

The protein belongs to the universal ribosomal protein uS7 family. In terms of assembly, part of the 30S ribosomal subunit. Contacts proteins S9 and S11.

One of the primary rRNA binding proteins, it binds directly to 16S rRNA where it nucleates assembly of the head domain of the 30S subunit. Is located at the subunit interface close to the decoding center, probably blocks exit of the E-site tRNA. This chain is Small ribosomal subunit protein uS7, found in Streptococcus pyogenes serotype M3 (strain ATCC BAA-595 / MGAS315).